The primary structure comprises 88 residues: Small ribosomal subunit protein bS16 (88 aa).

It belongs to the bacterial ribosomal protein bS16 family.

This chain is Small ribosomal subunit protein bS16, found in Buchnera aphidicola subsp. Cinara cedri (strain Cc).